A 176-amino-acid chain; its full sequence is N5-carboxyaminoimidazole ribonucleotide mutase (176 aa).

3 residues coordinate substrate: Ser-14, Asp-17, and Arg-44.

Belongs to the AIR carboxylase family. Class I subfamily.

The catalysed reaction is 5-carboxyamino-1-(5-phospho-D-ribosyl)imidazole + H(+) = 5-amino-1-(5-phospho-D-ribosyl)imidazole-4-carboxylate. Its pathway is purine metabolism; IMP biosynthesis via de novo pathway; 5-amino-1-(5-phospho-D-ribosyl)imidazole-4-carboxylate from 5-amino-1-(5-phospho-D-ribosyl)imidazole (N5-CAIR route): step 2/2. In terms of biological role, catalyzes the conversion of N5-carboxyaminoimidazole ribonucleotide (N5-CAIR) to 4-carboxy-5-aminoimidazole ribonucleotide (CAIR). This is N5-carboxyaminoimidazole ribonucleotide mutase from Synechocystis sp. (strain ATCC 27184 / PCC 6803 / Kazusa).